The primary structure comprises 550 residues: Formate--tetrahydrofolate ligase (550 aa).

62–69 (TPAGEGKS) lines the ATP pocket.

This sequence belongs to the formate--tetrahydrofolate ligase family.

It catalyses the reaction (6S)-5,6,7,8-tetrahydrofolate + formate + ATP = (6R)-10-formyltetrahydrofolate + ADP + phosphate. Its pathway is one-carbon metabolism; tetrahydrofolate interconversion. This is Formate--tetrahydrofolate ligase from Corynebacterium diphtheriae (strain ATCC 700971 / NCTC 13129 / Biotype gravis).